We begin with the raw amino-acid sequence, 312 residues long: Calcium-independent mitochondrial carrier protein SCaMC-3L (312 aa).

Solcar repeat units follow at residues 27 to 113 (GTLW…SRNF), 121 to 206 (PSFQ…LRCL), and 217 to 304 (PSGL…MKKT). Helical transmembrane passes span 33 to 50 (LLSGAMAGAVSRTGTAPL), 88 to 107 (GNGINVLKIAPEYAIKFSVF), 131 to 144 (SLAVAISQTLINPM), 182 to 200 (YLPNMLGIIPYACTDLAVY), 219 to 243 (GLVSLSSVTLSTTCGQMASYPLTLV), and 279 to 298 (GMTPTLLKVLPAGGISYLVY).

This sequence belongs to the mitochondrial carrier (TC 2.A.29) family. Mainly expressed in testis and at lesser levels in brain.

The protein localises to the mitochondrion inner membrane. The enzyme catalyses Mg(2+)(out) + phosphate(in) + ATP(out) = Mg(2+)(in) + phosphate(out) + ATP(in). The catalysed reaction is ADP(out) + phosphate(in) + H(+)(out) = ADP(in) + phosphate(out) + H(+)(in). Its function is as follows. Calcium-independent ATP-Mg/Pi exchanger that catalyzes the electroneutral exchange of Mg-ATP or free ADP against an hydrogenphosphate and participates in the net transport of adenine nucleotides across the mitochondria inner membrane. In Rattus norvegicus (Rat), this protein is Calcium-independent mitochondrial carrier protein SCaMC-3L.